The following is a 466-amino-acid chain: tRNA-2-methylthio-N(6)-dimethylallyladenosine synthase (466 aa).

Residues Arg5 to Arg125 enclose the MTTase N-terminal domain. Residues Cys14, Cys50, Cys88, Cys166, Cys170, and Cys173 each contribute to the [4Fe-4S] cluster site. The Radical SAM core domain occupies Arg152 to Ala384. Residues Lys387–Ala449 enclose the TRAM domain.

This sequence belongs to the methylthiotransferase family. MiaB subfamily. In terms of assembly, monomer. The cofactor is [4Fe-4S] cluster.

It is found in the cytoplasm. The enzyme catalyses N(6)-dimethylallyladenosine(37) in tRNA + (sulfur carrier)-SH + AH2 + 2 S-adenosyl-L-methionine = 2-methylsulfanyl-N(6)-dimethylallyladenosine(37) in tRNA + (sulfur carrier)-H + 5'-deoxyadenosine + L-methionine + A + S-adenosyl-L-homocysteine + 2 H(+). In terms of biological role, catalyzes the methylthiolation of N6-(dimethylallyl)adenosine (i(6)A), leading to the formation of 2-methylthio-N6-(dimethylallyl)adenosine (ms(2)i(6)A) at position 37 in tRNAs that read codons beginning with uridine. The protein is tRNA-2-methylthio-N(6)-dimethylallyladenosine synthase of Bradyrhizobium sp. (strain BTAi1 / ATCC BAA-1182).